A 1481-amino-acid chain; its full sequence is Cystic fibrosis transmembrane conductance regulator (1481 aa).

Topologically, residues 1-77 (MQRSPLEKAS…KLINALRRCF (77 aa)) are cytoplasmic. Residues 78 to 98 (FWRFMFYGIILYLGEVTKAVQ) form a helical membrane-spanning segment. In terms of domain architecture, ABC transmembrane type-1 1 spans 81 to 365 (FMFYGIILYL…WAVQTWYDSL (285 aa)). Residues 99 to 122 (PLLLGRIIASYDPDNKVERSIAIY) are Extracellular-facing. Residues 123–146 (LGIGLCLLFIVRTLLLHPAIFGLH) traverse the membrane as a helical segment. Residues 147–195 (HIGMQMRIAMFSLIYKKTLKLSSRVLDKISIGQLVSLLSNNLNKFDEGL) are Cytoplasmic-facing. The chain crosses the membrane as a helical span at residues 196-216 (ALAHFVWIAPLQVTLLMGLLW). Over 217-222 (DLLQAF) the chain is Extracellular. A helical transmembrane segment spans residues 223–243 (TFCGLAFLVVLALLQAGLGKM). Over 244-298 (MMKYRDQRAGKINERLVITSEMIENIQSVKAYCWEEAMEKIIENLRQTELKLTRK) the chain is Cytoplasmic. A helical transmembrane segment spans residues 299–319 (AAYVRYLNSSAFFFSGFFVVF). Residues 320-339 (LSVLPYALLKGIILRKIFTT) lie on the Extracellular side of the membrane. A helical membrane pass occupies residues 340–358 (ISFCIVLRMAVTRQFPWAV). Residues 359-858 (QTWYDSLGAI…YLRYITVHKS (500 aa)) are Cytoplasmic-facing. Residues Trp401, 457 to 464 (GSTGAGKT), and Gln492 contribute to the ATP site. The region spanning 421-645 (ISNCDTSLFF…RPDFSSKLMG (225 aa)) is the ABC transporter 1 domain. The S-palmitoyl cysteine moiety is linked to residue Cys523. Phosphoserine is present on residues Ser548 and Ser659. Residues 653 to 831 (TAERRNSIIT…EEINEEDLRD (179 aa)) form a disordered R region region. At Ser669 the chain carries Phosphoserine; by PKA. Phosphoserine is present on Ser685. Lys687 participates in a covalent cross-link: Glycyl lysine isopeptide (Lys-Gly) (interchain with G-Cter in ubiquitin). A phosphoserine mark is found at Ser699 and Ser711. Thr716 is modified (phosphothreonine). Ser736, Ser767, Ser790, Ser795, and Ser813 each carry phosphoserine. Residues 859-879 (LMFVLIWCLVVFLVEVAASLV) traverse the membrane as a helical segment. Residues 859 to 1155 (LMFVLIWCLV…AVNSSIDVDS (297 aa)) form the ABC transmembrane type-1 2 domain. Residues 880–918 (VLCLFPKILLQDKGNSTKNASNSYAVIITSTSSYYIFYI) are Extracellular-facing. N-linked (GlcNAc...) asparagine glycans are attached at residues Asn894 and Asn898. A discontinuously helical transmembrane segment spans residues 919–939 (YVGVADTLLALGLFRGLPLVH). The Cytoplasmic portion of the chain corresponds to 940–990 (TLITVSKTLHHKMLQSVLQAPMSTLNTLKTGGILNRFSKDIAVLDDLLPLT). A helical membrane pass occupies residues 991 to 1011 (IFDFIQLLLIVIGAVVVVSVL). Residues 1012–1013 (QP) are Extracellular-facing. Residues 1014–1034 (YIFLATVPVIAAFILLRGYFL) form a helical membrane-spanning segment. Residues 1035 to 1095 (HTSQQLKQLE…TANWFLYLST (61 aa)) lie on the Cytoplasmic side of the membrane. Residues 1096-1116 (LRWFQMRIEMIFVIFFIAVTF) form a helical membrane-spanning segment. Residues 1117 to 1130 (ISILTTGEGEGRVG) are Extracellular-facing. The chain crosses the membrane as a helical span at residues 1131 to 1151 (IILTLAMNIMGTLQWAVNSSI). The Cytoplasmic segment spans residues 1152 to 1481 (DVDSLMRSVS…TEEEVQETKL (330 aa)). Residues 1211–1444 (MTVKDLTAKY…KSLFRQAISP (234 aa)) form the ABC transporter 2 domain. ATP contacts are provided by residues Tyr1220 and 1245–1252 (GRTGSGKS). The tract at residues 1387–1481 (RTLKQAFADC…TEEEVQETKL (95 aa)) is interaction with GORASP2. Cys1396 carries the S-palmitoyl cysteine lipid modification. Ser1457 carries the post-translational modification Phosphoserine. The short motif at 1479–1481 (TKL) is the PDZ-binding element.

It belongs to the ABC transporter superfamily. ABCC family. CFTR transporter (TC 3.A.1.202) subfamily. Monomer; does not require oligomerization for channel activity. May form oligomers in the membrane. Interacts with SLC26A3, SLC26A6 and NHERF1. Interacts with SHANK2. Interacts with MYO6. Interacts (via C-terminus) with GOPC (via PDZ domain); this promotes CFTR internalization and thereby decreases channel activity. Interacts with SLC4A7 through NHERF1. Found in a complex with MYO5B and RAB11A. Interacts with ANO1. Interacts with SLC26A8. Interacts with AHCYL1; the interaction increases CFTR activity. Interacts with CSE1L. The core-glycosylated form interacts with GORASP2 (via PDZ GRASP-type 1 domain) in respone to ER stress. Interacts with MARCHF2; the interaction leads to CFTR ubiqtuitination and degradation. Interacts with ADGRG2. Post-translationally, N-glycosylated. Phosphorylated; cAMP treatment promotes phosphorylation and activates the channel. Dephosphorylation decreases the ATPase activity (in vitro). Phosphorylation at PKA sites activates the channel. Phosphorylation at PKC sites enhances the response to phosphorylation by PKA. Phosphorylated by AMPK; this inhibits channel activity. In terms of processing, ubiquitinated, leading to its degradation in the lysosome. Deubiquitination by USP10 in early endosomes enhances its endocytic recycling to the cell membrane. Ubiquitinated by RNF185 during ER stress. Ubiquitinated by MARCHF2.

It is found in the apical cell membrane. The protein resides in the early endosome membrane. It localises to the cell membrane. Its subcellular location is the recycling endosome membrane. The protein localises to the endoplasmic reticulum membrane. It is found in the nucleus. It carries out the reaction ATP + H2O + closed Cl(-) channel = ADP + phosphate + open Cl(-) channel.. The catalysed reaction is chloride(in) = chloride(out). The enzyme catalyses hydrogencarbonate(in) = hydrogencarbonate(out). It catalyses the reaction ATP + H2O = ADP + phosphate + H(+). Functionally, epithelial ion channel that plays an important role in the regulation of epithelial ion and water transport and fluid homeostasis. Mediates the transport of chloride ions across the cell membrane. Possesses an intrinsic ATPase activity and utilizes ATP to gate its channel; the passive flow of anions through the channel is gated by cycles of ATP binding and hydrolysis by the ATP-binding domains. The ion channel is also permeable to HCO(3)(-); selectivity depends on the extracellular chloride concentration. Exerts its function also by modulating the activity of other ion channels and transporters. Contributes to the regulation of the pH and the ion content of the epithelial fluid layer. Modulates the activity of the epithelial sodium channel (ENaC) complex, in part by regulating the cell surface expression of the ENaC complex. May regulate bicarbonate secretion and salvage in epithelial cells by regulating the transporter SLC4A7. Can inhibit the chloride channel activity of ANO1. Plays a role in the chloride and bicarbonate homeostasis during sperm epididymal maturation and capacitation. This is Cystic fibrosis transmembrane conductance regulator from Ovis aries (Sheep).